Reading from the N-terminus, the 287-residue chain is Thymidylate synthase (287 aa).

Arg21 contacts dUMP. Residue His51 participates in (6R)-5,10-methylene-5,6,7,8-tetrahydrofolate binding. 150–151 serves as a coordination point for dUMP; it reads RR. Cys170 (nucleophile) is an active-site residue. Residues 190–193, Asn201, and 231–233 each bind dUMP; these read RSGD and HIY. Position 193 (Asp193) interacts with (6R)-5,10-methylene-5,6,7,8-tetrahydrofolate. A (6R)-5,10-methylene-5,6,7,8-tetrahydrofolate-binding site is contributed by Ala286.

Belongs to the thymidylate synthase family. Bacterial-type ThyA subfamily. As to quaternary structure, homodimer.

The protein resides in the cytoplasm. The catalysed reaction is dUMP + (6R)-5,10-methylene-5,6,7,8-tetrahydrofolate = 7,8-dihydrofolate + dTMP. Its pathway is pyrimidine metabolism; dTTP biosynthesis. Its function is as follows. Catalyzes the reductive methylation of 2'-deoxyuridine-5'-monophosphate (dUMP) to 2'-deoxythymidine-5'-monophosphate (dTMP) while utilizing 5,10-methylenetetrahydrofolate (mTHF) as the methyl donor and reductant in the reaction, yielding dihydrofolate (DHF) as a by-product. This enzymatic reaction provides an intracellular de novo source of dTMP, an essential precursor for DNA biosynthesis. This chain is Thymidylate synthase, found in Mycoplasma pneumoniae (strain ATCC 29342 / M129 / Subtype 1) (Mycoplasmoides pneumoniae).